Here is a 366-residue protein sequence, read N- to C-terminus: Arfaptin-1 (366 aa).

Residues 1–78 are disordered; it reads MAEESPKNSA…SSAPPLPCVL (78 aa). At Ala2 the chain carries N-acetylalanine. Ser5 carries the phosphoserine modification. Residues 22 to 35 show a composition bias toward basic and acidic residues; the sequence is GDAHEHGYNRDLKH. Phosphoserine is present on residues Ser36 and Ser39. Residues 44–53 are compositionally biased toward polar residues; the sequence is SETQITSHGF. Residues Ser69, Ser79, and Ser125 each carry the phosphoserine modification. An AH domain is found at 146 to 346; that stretch reads TVDLELEAQI…NQKQLEQTLK (201 aa). The residue at position 354 (Thr354) is a Phosphothreonine.

Forms homodimers or heterodimers with ARFIP2. Interacts with non-myristoylated GTP-bound ARF3, but not to GDP-bound ARF3. Interacts with ARF1. Binds with lower affinity to ARF5 and with very little affinity to ARF6. Interacts with ARL1. Interacts with ATG9A.

It localises to the golgi apparatus. Its subcellular location is the trans-Golgi network membrane. In terms of biological role, plays a role in controlling biogenesis of secretory granules at the trans-Golgi network. Mechanistically, binds ARF-GTP at the neck of a growing secretory granule precursor and forms a protective scaffold. Once the granule precursor has been completely loaded, active PRKD1 phosphorylates ARFIP1 and releases it from ARFs. In turn, ARFs induce fission. Through this mechanism, ensures proper secretory granule formation at the Golgi of pancreatic beta cells. The sequence is that of Arfaptin-1 from Rattus norvegicus (Rat).